The chain runs to 357 residues: MMKQILFSGVIGLFLTLVGTPLLIKLLARKGYGQYIRDDGPREHHSKRGTPTMGGIAFILATIIAYFMSKVITGYTPTFSGLLVLGLMAGMGLVGFLDDYIKIVKRRSLGLRAKAKMAGQLIVGIAFAVLALQFADNHGNTPASTRLSFVEDFGWTIGPVLFVIWALFMILAMSNGVNLTDGLDGLATGAATMVFGAYTFIGVWQFQESCANAQTLTNPAACYEVRDPLDLAVVASALMGACFGFLWWNTSPAKIFMGDTGSLALGGALAGLAICSRTELLVALLGGLFVLITMSVVIQVGSFRLTGKRVFRMAPLQHHFELKGWSEVLVVVRFWIIQGMCVIVGLGLFYAGWAAKK.

A run of 10 helical transmembrane segments spans residues 4–24 (QILFSGVIGLFLTLVGTPLLI), 52–72 (TMGGIAFILATIIAYFMSKVI), 77–97 (PTFSGLLVLGLMAGMGLVGFL), 115–135 (AKMAGQLIVGIAFAVLALQFA), 153–173 (FGWTIGPVLFVIWALFMILAM), 186–206 (LATGAATMVFGAYTFIGVWQF), 228–248 (PLDLAVVASALMGACFGFLWW), 255–275 (IFMGDTGSLALGGALAGLAIC), 280–300 (LLVALLGGLFVLITMSVVIQV), and 334–354 (FWIIQGMCVIVGLGLFYAGWA).

It belongs to the glycosyltransferase 4 family. MraY subfamily. Mg(2+) serves as cofactor.

It is found in the cell membrane. It catalyses the reaction UDP-N-acetyl-alpha-D-muramoyl-L-alanyl-gamma-D-glutamyl-meso-2,6-diaminopimeloyl-D-alanyl-D-alanine + di-trans,octa-cis-undecaprenyl phosphate = di-trans,octa-cis-undecaprenyl diphospho-N-acetyl-alpha-D-muramoyl-L-alanyl-D-glutamyl-meso-2,6-diaminopimeloyl-D-alanyl-D-alanine + UMP. It participates in cell wall biogenesis; peptidoglycan biosynthesis. Its function is as follows. Catalyzes the initial step of the lipid cycle reactions in the biosynthesis of the cell wall peptidoglycan: transfers peptidoglycan precursor phospho-MurNAc-pentapeptide from UDP-MurNAc-pentapeptide onto the lipid carrier undecaprenyl phosphate, yielding undecaprenyl-pyrophosphoryl-MurNAc-pentapeptide, known as lipid I. The polypeptide is Phospho-N-acetylmuramoyl-pentapeptide-transferase (Streptomyces avermitilis (strain ATCC 31267 / DSM 46492 / JCM 5070 / NBRC 14893 / NCIMB 12804 / NRRL 8165 / MA-4680)).